The sequence spans 106 residues: Small ribosomal subunit protein bS20 (106 aa).

The span at 1 to 20 (MATAKPKKKNPRLASGRKRV) shows a compositional bias: basic residues. Residues 1–21 (MATAKPKKKNPRLASGRKRVR) are disordered.

It belongs to the bacterial ribosomal protein bS20 family.

Its function is as follows. Binds directly to 16S ribosomal RNA. The sequence is that of Small ribosomal subunit protein bS20 from Polaromonas naphthalenivorans (strain CJ2).